The primary structure comprises 41 residues: Bacteriocin bavaricin-A (41 aa).

It belongs to the bacteriocin class IIA/YGNGV family.

The protein resides in the secreted. Its function is as follows. This heat stable bacteriocin shows activity against species of Lactobacillus, Listeria monocytogenes, Pediococcus, Enterococcus, Leuconostoc and Lactococcus. This is Bacteriocin bavaricin-A from Latilactobacillus sakei (Lactobacillus sakei).